We begin with the raw amino-acid sequence, 173 residues long: Chorion protein S19 (173 aa).

Positions Met1–Ala21 are cleaved as a signal peptide.

Belongs to the chorion protein S19 family.

It is found in the secreted. Chorion membrane (egg shell) protein; plays a role in protecting the egg from the environment. This Drosophila melanogaster (Fruit fly) protein is Chorion protein S19 (Cp19).